Reading from the N-terminus, the 2314-residue chain is A-kinase anchor protein 6 (2314 aa).

Residues 1 to 12 show a composition bias toward polar residues; that stretch reads MLTMSVTLSPLR. Disordered regions lie at residues 1–25, 285–432, 505–613, and 736–755; these read MLTM…DASP, PSSC…DPPD, SLCR…PCHA, and TDEK…HSAT. Over residues 301 to 311 the composition is skewed to basic and acidic residues; it reads SDDHKGEHGED. Residues 319 to 330 are compositionally biased toward polar residues; the sequence is QLDSTVGMSSLD. Basic and acidic residues predominate over residues 398-420; that stretch reads ETQKNERKGSDRKGQVVDLKPEL. The span at 569 to 592 shows a compositional bias: low complexity; that stretch reads SKASSSPPCSHSSESSLGSDSIKS. The span at 736–753 shows a compositional bias: basic and acidic residues; that stretch reads TDEKSERPSSSEKNESHS. 2 Spectrin repeats span residues 768–847 and 1033–1148; these read QHQE…QLLE and ILEK…LLDD. A Phosphoserine modification is found at Ser-1072. The tract at residues 1349–1401 is disordered; sequence CHSGDLSQNSGSESGIVSEGDNEMPTNSDMSLFSMVDGSPSNPETEHPDPQMG. Residues 1353 to 1363 are compositionally biased toward polar residues; it reads DLSQNSGSESG. Phosphoserine occurs at positions 1568 and 1593. Basic and acidic residues-rich tracts occupy residues 1816–1831 and 1874–1891; these read RSGV…DGGG and GENK…HVAD. Disordered regions lie at residues 1816-1838, 1854-1926, and 1940-2012; these read RSGV…ANPS, LSEN…KTIS, and SEDS…SGAR. Positions 1917–1926 are enriched in polar residues; that stretch reads NLASNVKTIS. Residues 1944–1958 are compositionally biased toward basic and acidic residues; the sequence is SVARKEFCPPNDRHP. Positions 2062–2075 are PKA-RII subunit binding domain; that stretch reads IIDMASTALKSKSQ. Residues 2166–2286 form a disordered region; the sequence is EEAGLPGALP…NAKQPKGKVA (121 aa). Positions 2215–2226 are enriched in basic and acidic residues; it reads GADDAKEGDDVS. The span at 2227 to 2243 shows a compositional bias: polar residues; the sequence is HTSQGCAESTEPTTPSG.

As to quaternary structure, interacts with RII subunit of PKA, phosphatase 2B (calcineurin) and AKAP79. Interacts with SYNPO2.

Its subcellular location is the sarcoplasmic reticulum. It localises to the nucleus membrane. Its function is as follows. Binds to type II regulatory subunits of protein kinase A and anchors/targets them to the nuclear membrane or sarcoplasmic reticulum. May act as an adapter for assembling multiprotein complexes. The sequence is that of A-kinase anchor protein 6 (Akap6) from Rattus norvegicus (Rat).